Here is a 498-residue protein sequence, read N- to C-terminus: Putative antiporter subunit mnhD2 (498 aa).

14 consecutive transmembrane segments (helical) span residues 2–22 (LSNL…ILVF), 32–52 (YLYL…LIYV), 78–98 (LSLI…AYGF), 108–128 (YHLP…FLTS), 130–150 (LFNL…LITL), 161–181 (IIYV…IGLL), 209–229 (ISLI…FMWL), 240–260 (LAAL…IRFF), 271–291 (IHPL…IGVI), 308–328 (IGFI…GAIF), 330–350 (LVND…LVYI), 369–389 (FGVA…FSGF), 403–423 (GNYI…YSLF), and 451–471 (ILSI…VVLN).

Belongs to the CPA3 antiporters (TC 2.A.63) subunit D family. May form a heterooligomeric complex that consists of seven subunits: mnhA2, mnhB2, mnhC2, mnhD2, mnhE2, mnhF2 and mnhG2.

It is found in the cell membrane. This Staphylococcus aureus (strain JH1) protein is Putative antiporter subunit mnhD2 (mnhD2).